We begin with the raw amino-acid sequence, 493 residues long: Ribosomal protein uS12 methylthiotransferase RimO (493 aa).

In terms of domain architecture, MTTase N-terminal spans 5–121 (RTVALVTLGC…ISDRLQTILN (117 aa)). The [4Fe-4S] cluster site is built by cysteine 14, cysteine 50, and cysteine 84. A disordered region spans residues 153–177 (LPGHGPTDLPEGVAPASGPRAPLRR). A Radical SAM core domain is found at 179 to 410 (LDGSPVASVK…RLAEELVSQR (232 aa)). [4Fe-4S] cluster is bound by residues cysteine 193, cysteine 197, and cysteine 200. Residues 412 to 482 (DERVGATVRV…GVDLVAEPLL (71 aa)) form the TRAM domain.

This sequence belongs to the methylthiotransferase family. RimO subfamily. Requires [4Fe-4S] cluster as cofactor.

Its subcellular location is the cytoplasm. It catalyses the reaction L-aspartate(89)-[ribosomal protein uS12]-hydrogen + (sulfur carrier)-SH + AH2 + 2 S-adenosyl-L-methionine = 3-methylsulfanyl-L-aspartate(89)-[ribosomal protein uS12]-hydrogen + (sulfur carrier)-H + 5'-deoxyadenosine + L-methionine + A + S-adenosyl-L-homocysteine + 2 H(+). Functionally, catalyzes the methylthiolation of an aspartic acid residue of ribosomal protein uS12. In Streptomyces coelicolor (strain ATCC BAA-471 / A3(2) / M145), this protein is Ribosomal protein uS12 methylthiotransferase RimO.